The primary structure comprises 122 residues: Large ribosomal subunit protein bL12 (122 aa).

It belongs to the bacterial ribosomal protein bL12 family. As to quaternary structure, homodimer. Part of the ribosomal stalk of the 50S ribosomal subunit. Forms a multimeric L10(L12)X complex, where L10 forms an elongated spine to which 2 to 4 L12 dimers bind in a sequential fashion. Binds GTP-bound translation factors.

Functionally, forms part of the ribosomal stalk which helps the ribosome interact with GTP-bound translation factors. Is thus essential for accurate translation. This Dichelobacter nodosus (strain VCS1703A) protein is Large ribosomal subunit protein bL12.